We begin with the raw amino-acid sequence, 160 residues long: Protein cornichon homolog 2 (160 aa).

Residues 1–10 are Cytoplasmic-facing; that stretch reads MAFTFAAFCY. A helical membrane pass occupies residues 11-31; the sequence is MLTLVLCASLIFFVIWHIIAF. At 32-72 the chain is on the lumenal side; sequence DELRTDFKNPIDQGNPARARERLKNIERICCLLRKLVVPEY. Residues 73-93 form a helical membrane-spanning segment; the sequence is SIHGLFCLMFLCAAEWVTLGL. The Cytoplasmic segment spans residues 94–138; that stretch reads NIPLLFYHLWRYFHRPADGSEVMYDAVSIMNADILNYCQKESWCK. Residues 139 to 159 traverse the membrane as a helical segment; that stretch reads LAFYLLSFFYYLYSMVYTLVS. Position 160 (Phe160) is a topological domain, lumenal.

It belongs to the cornichon family. In terms of assembly, acts as an auxiliary subunit for AMPA-selective glutamate receptors (AMPARs). Found in a complex with GRIA1, GRIA2, GRIA3, GRIA4, CNIH3, CACNG2, CACNG3, CACNG4, CACNG5, CACNG7 and CACNG8. Interacts with CACGN8. Interacts with GRIA1. Found in a complex with GRIA1, GRIA2, GRIA3, GRIA4, DLG4 and CACNG8. Expression is up-regulated in dorsolateral prefrontal cortex of patients with schizophrenia (postmortem brain study).

The protein localises to the endoplasmic reticulum membrane. It localises to the postsynaptic cell membrane. The protein resides in the cell projection. Its subcellular location is the dendrite. It is found in the dendritic spine. The protein localises to the postsynaptic density. Regulates the trafficking and gating properties of AMPA-selective glutamate receptors (AMPARs). Promotes their targeting to the cell membrane and synapses and modulates their gating properties by regulating their rates of activation, deactivation and desensitization. Blocks CACNG8-mediated resensitization of AMPA receptors. The sequence is that of Protein cornichon homolog 2 from Homo sapiens (Human).